Consider the following 655-residue polypeptide: D-xylonate dehydratase YagF (655 aa).

It belongs to the IlvD/Edd family.

It catalyses the reaction D-xylonate = 2-dehydro-3-deoxy-D-arabinonate + H2O. Catalyzes the dehydration of D-xylonic acid to form 2-dehydro-3-deoxy-D-pentonate. This is D-xylonate dehydratase YagF (yagF) from Escherichia coli (strain K12).